Reading from the N-terminus, the 585-residue chain is 1-deoxy-D-xylulose-5-phosphate synthase (585 aa).

Residues His80 and 121-123 each bind thiamine diphosphate; that span reads GHS. Asp152 contacts Mg(2+). Residues 153-154, Asn181, Tyr259, and Glu334 contribute to the thiamine diphosphate site; that span reads GS. Residue Asn181 coordinates Mg(2+).

The protein belongs to the transketolase family. DXPS subfamily. In terms of assembly, homodimer. The cofactor is Mg(2+). Requires thiamine diphosphate as cofactor.

It catalyses the reaction D-glyceraldehyde 3-phosphate + pyruvate + H(+) = 1-deoxy-D-xylulose 5-phosphate + CO2. Its pathway is metabolic intermediate biosynthesis; 1-deoxy-D-xylulose 5-phosphate biosynthesis; 1-deoxy-D-xylulose 5-phosphate from D-glyceraldehyde 3-phosphate and pyruvate: step 1/1. Catalyzes the acyloin condensation reaction between C atoms 2 and 3 of pyruvate and glyceraldehyde 3-phosphate to yield 1-deoxy-D-xylulose-5-phosphate (DXP). The polypeptide is 1-deoxy-D-xylulose-5-phosphate synthase (Buchnera aphidicola subsp. Schizaphis graminum (strain Sg)).